A 248-amino-acid polypeptide reads, in one-letter code: MACAEQDKLGQAFEDAFEVLRQHSTGDFQYSSDYKNYLAFINHRSHIRGNSNSYGVQPAEEPIYNWRTVINSATDLYFEGNIHQSLQNIPENQLVQPALLQQKGGKGRKKLRLFEYLHESLCNPEMASCIQWIDQTKGIFQFVSKNKEKLAQLWGKRKGNRKTMTYQKMARALRNYGRTGEIIKIRRKLTYQFSEAILQRLSAPYFLEKEIFYSQYVQPDQGYLSLNNWNANYNYTYANYHELSHPDC.

Residues 111 to 194 (LRLFEYLHES…IRRKLTYQFS (84 aa)) constitute a DNA-binding region (ETS).

This sequence belongs to the ETS family. In terms of assembly, binds DNA as a monomer.

It localises to the nucleus. Functionally, controls the development of red pulp macrophages required for red blood cells recycling and iron homeostasis. Transcription factor that binds to the PU-box, a purine-rich DNA sequence (5'-GAGGA[AT]-3') that can act as a lymphoid-specific enhancer. Regulates VCAM1 gene expression. In Bos taurus (Bovine), this protein is Transcription factor Spi-C (SPIC).